Reading from the N-terminus, the 87-residue chain is Large ribosomal subunit protein bL27 (87 aa).

The interval 1 to 25 (MAHKKGASSSRNGRDSNAQRLGVKR) is disordered. Over residues 7 to 19 (ASSSRNGRDSNAQ) the composition is skewed to polar residues.

This sequence belongs to the bacterial ribosomal protein bL27 family.

In Rhodococcus opacus (strain B4), this protein is Large ribosomal subunit protein bL27.